A 769-amino-acid polypeptide reads, in one-letter code: MRLLRRWAFAALLLSLLPTPGLGTQGPAGALRWGGLPQLGGPGAPEVTEPSRLVRESSGGEVRKQQLDTRVRQEPPGGPPVHLAQVSFVIPAFNSNFTLDLELNHHLLSSQYVERHFSREGTTQHSTGAGDHCYYQGKLRGNPHSFAALSTCQGLHGVFSDGNLTYIVEPQEVAGPWGAPQGPLPHLIYRTPLLPDPLGCREPGCLFAVPAQSAPPNRPRLRRKRQVRRGHPTVHSETKYVELIVINDHQLFEQMRQSVVLTSNFAKSVVNLADVIYKEQLNTRIVLVAMETWADGDKIQVQDDLLETLARLMVYRREGLPEPSDATHLFSGRTFQSTSSGAAYVGGICSLSHGGGVNEYGNMGAMAVTLAQTLGQNLGMMWNKHRSSAGDCKCPDIWLGCIMEDTGFYLPRKFSRCSIDEYNQFLQEGGGSCLFNKPLKLLDPPECGNGFVEAGEECDCGSVQECSRAGGNCCKKCTLTHDAMCSDGLCCRRCKYEPRGVSCREAVNECDIAETCTGDSSQCPPNLHKLDGYYCDHEQGRCYGGRCKTRDRQCQVLWGHAAADRFCYEKLNVEGTERGSCGRKGSGWVQCSKQDVLCGFLLCVNISGAPRLGDLVGDISSVTFYHQGKELDCRGGHVQLADGSDLSYVEDGTACGPNMLCLDHRCLPASAFNFSTCPGSGERRICSHHGVCSNEGKCICQPDWTGKDCSIHNPLPTSPPTGETERYKGPSGTNIIIGSIAGAVLVAAIVLGGTGWGFKNIRRGRSGGA.

Positions 1–23 (MRLLRRWAFAALLLSLLPTPGLG) are cleaved as a signal peptide. A propeptide spanning residues 24 to 225 (TQGPAGALRW…PNRPRLRRKR (202 aa)) is cleaved from the precursor. Residues 40–78 (GGPGAPEVTEPSRLVRESSGGEVRKQQLDTRVRQEPPGG) form a disordered region. Residues 61-73 (EVRKQQLDTRVRQ) are compositionally biased toward basic and acidic residues. N96 and N163 each carry an N-linked (GlcNAc...) asparagine glycan. Residues 226–734 (QVRRGHPTVH…ERYKGPSGTN (509 aa)) are Extracellular-facing. A Peptidase M12B domain is found at 239-438 (KYVELIVIND…GGGSCLFNKP (200 aa)). The tract at residues 332-769 (GRTFQSTSSG…NIRRGRSGGA (438 aa)) is required for localization to cerebellar cortex basket cell terminals. Also required for localization of KCNA1, KCNA2, DLG4 and ADAM22 to cerebellar cortex basket cell terminal perisomatic axons and pinceaux. Intrachain disulfides connect C349–C433, C392–C417, C394–C401, and C503–C523. A Disintegrin domain is found at 444–531 (PPECGNGFVE…QCPPNLHKLD (88 aa)). 2 N-linked (GlcNAc...) asparagine glycosylation sites follow: N605 and N673. 3 disulfides stabilise this stretch: C677–C692, C686–C698, and C700–C709. Residues 677–709 (CPGSGERRICSHHGVCSNEGKCICQPDWTGKDC) form the EGF-like domain. Residues 735–755 (IIIGSIAGAVLVAAIVLGGTG) traverse the membrane as a helical segment. The Cytoplasmic segment spans residues 756–769 (WGFKNIRRGRSGGA).

In terms of assembly, interacts with LGI1 and LGI4. Interacts with KCNA1/KV1.1, KCNA2/KV1.2, DLG4/PSD-95 and ADAM22. Post-translationally, the precursor is cleaved by a furin endopeptidase. Expressed predominantly in brain. Slightly detected or not at all in other tissues.

The protein localises to the presynaptic cell membrane. It localises to the perikaryon. The protein resides in the cell projection. It is found in the axon. In terms of biological role, probable ligand for integrin in the brain. This is a non catalytic metalloprotease-like protein. Required for localization of the potassium channel subunit proteins KCNA1/KV1.1 and KCNA2/KV1.2 at cerebellar cortex basket cell distal terminals, is thereby involved in ephaptic inhibitory synchronization of Purkinje cell firing and response to stress. Plays a role in spatial learning and motor coordination. Involved in the nociceptive pain response to chemical-derived stimulation. This Homo sapiens (Human) protein is Disintegrin and metalloproteinase domain-containing protein 11 (ADAM11).